Here is a 510-residue protein sequence, read N- to C-terminus: Maturase K (510 aa).

This sequence belongs to the intron maturase 2 family. MatK subfamily.

It is found in the plastid. Its subcellular location is the chloroplast. Usually encoded in the trnK tRNA gene intron. Probably assists in splicing its own and other chloroplast group II introns. In Cestrum elegans (Red cestrum), this protein is Maturase K.